A 607-amino-acid polypeptide reads, in one-letter code: Elongation factor 4 (607 aa).

The region spanning 11–193 (SKIRNFSIIA…QIVEKVPAPT (183 aa)) is the tr-type G domain. GTP contacts are provided by residues 23-28 (DHGKST) and 140-143 (NKID).

The protein belongs to the TRAFAC class translation factor GTPase superfamily. Classic translation factor GTPase family. LepA subfamily.

The protein resides in the cell membrane. It catalyses the reaction GTP + H2O = GDP + phosphate + H(+). Required for accurate and efficient protein synthesis under certain stress conditions. May act as a fidelity factor of the translation reaction, by catalyzing a one-codon backward translocation of tRNAs on improperly translocated ribosomes. Back-translocation proceeds from a post-translocation (POST) complex to a pre-translocation (PRE) complex, thus giving elongation factor G a second chance to translocate the tRNAs correctly. Binds to ribosomes in a GTP-dependent manner. This is Elongation factor 4 from Bacillus cereus (strain Q1).